Reading from the N-terminus, the 183-residue chain is Capsid protein (183 aa).

The interval 136-183 (NAPILSTLPETTVVRRRGRSPRRRTPSPRRRRSQSPRRRRTQSRESQC) is disordered. Positions 149-176 (VRRRGRSPRRRTPSPRRRRSQSPRRRRT) are enriched in basic residues. A phosphoserine; by host mark is found at S155, S162, and S170. The 1; half-length repeat unit spans residues 155 to 161 (SPRRRTP). The 3 X 8 AA repeats of S-P-R-R-R-[PR]-[ST]-Q stretch occupies residues 155-177 (SPRRRTPSPRRRRSQSPRRRRTQ). The Bipartite nuclear localization signal motif lies at 158-175 (RRTPSPRRRRSQSPRRRR). 2 repeat units span residues 162–169 (SPRRRRSQ) and 170–177 (SPRRRRTQ). Positions 177–183 (QSRESQC) are RNA binding.

The protein belongs to the orthohepadnavirus core antigen family. In terms of assembly, homodimerizes, then multimerizes. Interacts with cytosol exposed regions of viral L glycoprotein present in the reticulum-to-Golgi compartment. Interacts with human FLNB. Phosphorylated form interacts with host importin alpha; this interaction depends on the exposure of the NLS, which itself depends upon genome maturation and/or phosphorylation of the capsid protein. Interacts with host NUP153. Phosphorylated by host SRPK1, SRPK2, and maybe protein kinase C or GAPDH. Phosphorylation is critical for pregenomic RNA packaging. Protein kinase C phosphorylation is stimulated by HBx protein and may play a role in transport of the viral genome to the nucleus at the late step during the viral replication cycle.

It localises to the virion. Its subcellular location is the host cytoplasm. In terms of biological role, self assembles to form an icosahedral capsid. Most capsids appear to be large particles with an icosahedral symmetry of T=4 and consist of 240 copies of capsid protein, though a fraction forms smaller T=3 particles consisting of 180 capsid proteins. Entering capsids are transported along microtubules to the nucleus. Phosphorylation of the capsid is thought to induce exposure of nuclear localization signal in the C-terminal portion of the capsid protein that allows binding to the nuclear pore complex via the importin (karyopherin-) alpha and beta. Capsids are imported in intact form through the nuclear pore into the nuclear basket, where it probably binds NUP153. Only capsids that contain the mature viral genome can release the viral DNA and capsid protein into the nucleoplasm. Immature capsids get stuck in the basket. Capsids encapsulate the pre-genomic RNA and the P protein. Pre-genomic RNA is reverse-transcribed into DNA while the capsid is still in the cytoplasm. The capsid can then either be directed to the nucleus, providing more genomes for transcription, or bud through the endoplasmic reticulum to provide new virions. This chain is Capsid protein, found in Hepatitis B virus genotype D (isolate France/alpha1/1989) (HBV-D).